The sequence spans 300 residues: Mitochondrial tricarboxylate transporter 1 (300 aa).

Solcar repeat units lie at residues 8–98 (VSPS…FRSM), 107–197 (LSNS…LRDW), and 209–294 (INWL…VVWL). Transmembrane regions (helical) follow at residues 11–31 (SVSV…TFPI), 67–87 (PKGL…KAGV), 114–134 (LAGM…SETI), 172–191 (GVVP…LGTY), 208–228 (LINW…AVYG), and 277–297 (LIVS…LLAG).

This sequence belongs to the mitochondrial carrier (TC 2.A.29) family.

It localises to the mitochondrion membrane. Functionally, mitochondrial tricarboxylate transporter; part of the gene cluster that mediates the biosynthesis of itaconic acid and 2-hydroxyparaconate. Cis-aconitate is secreted by the mitochondrial tricarboxylate transporter MTT1. In the cytosol cis-aconitate is converted into trans-aconitate via isomerization by the aconitate-delta-isomerase ADI1. Decarboxylation of trans-aconitate by the trans-aconitate decarboxylase TAD1 then leads then to the production of itaconic acid. The cytochrome P450 monooxygenase CYP3 further converts itaconate to 2-hydroxyparaconate via oxidation of the double bond, leading to a transient epoxide, which can subsequently be lactonized to produce 2-hydroxyparaconate. Secretion of itaconate and possibly 2-hydroxyparaconate into the medium is mediated by the major facilitator ITP1. The glyoxalase domain-containing protein RDO1 is not involved in the biosynthesis of itaconate and 2-hydroxyparaconate, however, it might play a role in the further conversion of 2-hydroxyparaconate to itatartarate. This is Mitochondrial tricarboxylate transporter 1 from Mycosarcoma maydis (Corn smut fungus).